Here is a 269-residue protein sequence, read N- to C-terminus: Adenylate kinase (269 aa).

Residue 61-66 (GAGKGT) participates in ATP binding. The segment at 81–110 (ATGDMLREQVARQTELGKAAKQIMDQGGLV) is NMP. Residues threonine 82, arginine 87, 108-110 (GLV), 137-140 (GFPR), and glutamine 144 contribute to the AMP site. The tract at residues 178 to 215 (GRLVHPASGRSYHKEFNPPKKPMTDDITGEPLIQRSDD) is LID. Residues arginine 179 and 188 to 189 (SY) each bind ATP. Residues arginine 212 and arginine 223 each coordinate AMP. ATP is bound at residue glutamine 251.

This sequence belongs to the adenylate kinase family. AK2 subfamily. In terms of assembly, monomer.

The protein localises to the cytoplasm. Its subcellular location is the cytosol. It is found in the mitochondrion intermembrane space. It catalyses the reaction AMP + ATP = 2 ADP. Catalyzes the reversible transfer of the terminal phosphate group between ATP and AMP. Plays an important role in cellular energy homeostasis and in adenine nucleotide metabolism. Adenylate kinase activity is critical for regulation of the phosphate utilization and the AMP de novo biosynthesis pathways. This is Adenylate kinase from Cryptococcus neoformans var. neoformans serotype D (strain B-3501A) (Filobasidiella neoformans).